Reading from the N-terminus, the 564-residue chain is MFS-type efflux pump LUC4 (564 aa).

Residues 1–15 show a composition bias toward polar residues; the sequence is MGQSQDNTQLTTASP. A disordered region spans residues 1–35; sequence MGQSQDNTQLTTASPQAEKDLSSNDNPPESEPAAP. The next 5 helical transmembrane spans lie at 42–62, 78–98, 108–128, 141–161, and 170–190; these read WLVF…TSII, LYVW…PIFA, SLTL…GGAH, GVGG…MVSV, and IIGG…GAFA. Asn192 carries N-linked (GlcNAc...) asparagine glycosylation. Transmembrane regions (helical) follow at residues 197–217, 236–256, and 268–288; these read WIFY…IVFL, WGGS…LSWG, and LVPL…QGAP. An N-linked (GlcNAc...) asparagine glycan is attached at Asn302. The next 5 helical transmembrane spans lie at 308–328, 343–363, 371–391, 404–424, and 436–456; these read LFVI…FLPV, VMLF…GIFI, VWHF…TLLD, LLFG…ILAS, and AWTF…AAAF. Residue Asn461 is glycosylated (N-linked (GlcNAc...) asparagine). A helical membrane pass occupies residues 512-532; that stretch reads KLVWQVSIAFSVLGFVLAFLV.

It belongs to the major facilitator superfamily. TCR/Tet family.

The protein resides in the membrane. Its function is as follows. MFS-type efflux pump; part of the gene cluster that mediates the biosynthesis of the mycotoxin lucilactaene and the lucilactaene-related compound NG-391 that act as cell cycle inhibitors with potent growth inhibitory activity against malarial parasites, moderate growth inhibitory activity against cancer cells, and no activity against bacteria and fungi. The protein is MFS-type efflux pump LUC4 of Fusarium sp.